Here is a 311-residue protein sequence, read N- to C-terminus: Olfactory receptor 1L4 (311 aa).

The Extracellular segment spans residues 1–26 (METKNYSSSTSGFILLGLSSNPKLQK). A glycan (N-linked (GlcNAc...) asparagine) is linked at Asn-5. A helical membrane pass occupies residues 27-50 (PLFAIFLIMYLLTAVGNVLIILAI). The Cytoplasmic portion of the chain corresponds to 51–58 (YSDPRLHT). Residues 59–80 (PMYFFLSNLSFMDICFTTVIVP) traverse the membrane as a helical segment. Residues 81–101 (KMLVNFLSETKIISYVGCLIQ) are Extracellular-facing. Residues Cys-98 and Cys-190 are joined by a disulfide bond. The helical transmembrane segment at 102 to 121 (MYFFMAFGNTDSYLLASMAI) threads the bilayer. Residues 122 to 140 (DRLVAICNPLHYDVVMKPW) lie on the Cytoplasmic side of the membrane. The chain crosses the membrane as a helical span at residues 141–159 (HCLLMLLGSCSISHLHSLF). Residues 160–197 (RVLLMSRLSFCASHIIKHFFCDTQPVLKLSCSDTSSSQ) are Extracellular-facing. A helical membrane pass occupies residues 198–220 (MVVMTETLAVIVTPFLCTIFSYL). The Cytoplasmic segment spans residues 221 to 237 (QIIVTVLRIPSAAGKWK). The helical transmembrane segment at 238-260 (AFSTCGSHLTVVVLFYGSVIYVY) threads the bilayer. The Extracellular portion of the chain corresponds to 261–273 (FRPLSMYSVMKGR). A helical transmembrane segment spans residues 274–293 (VATVMYTVVTPMLNPFIYSL). Topologically, residues 294 to 311 (RNKDMKRGLKKLRHRIYS) are cytoplasmic.

The protein belongs to the G-protein coupled receptor 1 family.

The protein resides in the cell membrane. Odorant receptor. The chain is Olfactory receptor 1L4 (OR1L4) from Homo sapiens (Human).